The sequence spans 499 residues: Cytochrome P450 11B1, mitochondrial (499 aa).

A mitochondrion-targeting transit peptide spans 1–24 (MALRVTADVWLARPWQCLHRTRAL). Heme is bound at residue Cys-446.

The protein belongs to the cytochrome P450 family. Requires heme as cofactor. In terms of tissue distribution, adrenal zona fasciculata/reticularis.

It is found in the mitochondrion inner membrane. The enzyme catalyses a steroid + 2 reduced [adrenodoxin] + O2 + 2 H(+) = an 11beta-hydroxysteroid + 2 oxidized [adrenodoxin] + H2O. It carries out the reaction 21-hydroxyprogesterone + 2 reduced [adrenodoxin] + O2 + 2 H(+) = corticosterone + 2 oxidized [adrenodoxin] + H2O. The catalysed reaction is 21-hydroxyprogesterone + 2 reduced [adrenodoxin] + O2 + 2 H(+) = 18-hydroxy-11-deoxycorticosterone + 2 oxidized [adrenodoxin] + H2O. It catalyses the reaction 21-hydroxyprogesterone + 2 reduced [adrenodoxin] + O2 + 2 H(+) = 19-hydroxy-11-deoxycorticosterone + 2 oxidized [adrenodoxin] + H2O. The enzyme catalyses 11-deoxycortisol + 2 reduced [adrenodoxin] + O2 + 2 H(+) = cortisol + 2 oxidized [adrenodoxin] + H2O. It carries out the reaction cortisol + 2 reduced [adrenodoxin] + O2 + 2 H(+) = 18-hydroxycortisol + 2 oxidized [adrenodoxin] + H2O. The catalysed reaction is 11-deoxycortisol + 2 reduced [adrenodoxin] + O2 + 2 H(+) = 18-hydroxy-11-deoxycortisol + 2 oxidized [adrenodoxin] + H2O. It functions in the pathway steroid biosynthesis; glucocorticoid biosynthesis. It participates in steroid hormone biosynthesis. In terms of biological role, a cytochrome P450 monooxygenase involved in the biosynthesis of adrenal corticoids. Catalyzes a variety of reactions that are essential for many species, including detoxification, defense, and the formation of endogenous chemicals like steroid hormones. Steroid 11beta, 18- and 19-hydroxylase with preferred regioselectivity at 11beta, then 18, and lastly 19. Catalyzes the hydroxylation of 11-deoxycortisol and 11-deoxycorticosterone (21-hydroxyprogesterone) at 11beta position, yielding cortisol or corticosterone, respectively, but cannot produce aldosterone. Mechanistically, uses molecular oxygen inserting one oxygen atom into a substrate for hydroxylation and reducing the second into a water molecule. Two electrons are provided by NADPH via a two-protein mitochondrial transfer system comprising flavoprotein FDXR (adrenodoxin/ferredoxin reductase) and nonheme iron-sulfur protein FDX1 or FDX2 (adrenodoxin/ferredoxin). Due to its lack of 18-oxidation activity, it is incapable of generating aldosterone. Could also be involved in the androgen metabolic pathway. The chain is Cytochrome P450 11B1, mitochondrial (Cyp11b1) from Rattus norvegicus (Rat).